A 62-amino-acid polypeptide reads, in one-letter code: Large ribosomal subunit protein bL28 (62 aa).

Residues 1 to 26 (MARKCYVTGKSPKSGNNRSHALNKTK) are disordered. Positions 11–20 (SPKSGNNRSH) are enriched in polar residues.

The protein belongs to the bacterial ribosomal protein bL28 family.

The polypeptide is Large ribosomal subunit protein bL28 (Exiguobacterium sibiricum (strain DSM 17290 / CCUG 55495 / CIP 109462 / JCM 13490 / 255-15)).